The sequence spans 117 residues: Large ribosomal subunit protein bL20c (117 aa).

This sequence belongs to the bacterial ribosomal protein bL20 family.

The protein localises to the plastid. It is found in the chloroplast. Binds directly to 23S ribosomal RNA and is necessary for the in vitro assembly process of the 50S ribosomal subunit. It is not involved in the protein synthesizing functions of that subunit. This Ceratophyllum demersum (Rigid hornwort) protein is Large ribosomal subunit protein bL20c.